The chain runs to 350 residues: Glyceraldehyde-3-phosphate dehydrogenase (350 aa).

Residues 10–11 (RI), aspartate 36, arginine 82, and serine 125 contribute to the NAD(+) site. D-glyceraldehyde 3-phosphate contacts are provided by residues 161–163 (SCT), threonine 193, 222–223 (TG), and arginine 245. Cysteine 162 serves as the catalytic Nucleophile. Asparagine 331 is a binding site for NAD(+).

The protein belongs to the glyceraldehyde-3-phosphate dehydrogenase family. Homotetramer.

Its subcellular location is the cytoplasm. The enzyme catalyses D-glyceraldehyde 3-phosphate + phosphate + NAD(+) = (2R)-3-phospho-glyceroyl phosphate + NADH + H(+). It participates in carbohydrate degradation; glycolysis; pyruvate from D-glyceraldehyde 3-phosphate: step 1/5. Functionally, catalyzes the oxidative phosphorylation of glyceraldehyde 3-phosphate (G3P) to 1,3-bisphosphoglycerate (BPG) using the cofactor NAD. The first reaction step involves the formation of a hemiacetal intermediate between G3P and a cysteine residue, and this hemiacetal intermediate is then oxidized to a thioester, with concomitant reduction of NAD to NADH. The reduced NADH is then exchanged with the second NAD, and the thioester is attacked by a nucleophilic inorganic phosphate to produce BPG. The chain is Glyceraldehyde-3-phosphate dehydrogenase (gap) from Treponema pallidum (strain Nichols).